A 346-amino-acid chain; its full sequence is Endosome-associated-trafficking regulator 1 (346 aa).

A compositionally biased stretch (polar residues) spans Phe-46–Arg-67. 3 disordered regions span residues Phe-46–Leu-77, Leu-93–Ser-129, and Ser-153–Glu-173. Residues Ser-170–Leu-317 are a coiled coil.

It belongs to the ENTR1 family.

Its subcellular location is the cytoplasm. The protein localises to the early endosome. It localises to the endosome. The protein resides in the recycling endosome. It is found in the midbody. Its subcellular location is the cytoskeleton. The protein localises to the microtubule organizing center. It localises to the centrosome. The protein resides in the cilium basal body. Its function is as follows. Endosome-associated protein that plays a role in membrane receptor sorting, cytokinesis and ciliogenesis. This Xenopus tropicalis (Western clawed frog) protein is Endosome-associated-trafficking regulator 1.